The sequence spans 660 residues: Zinc transporter ZIP4 (660 aa).

The first 22 residues, 1 to 22 (MLPKSVTQGLVLALLVGTVAVA), serve as a signal peptide directing secretion. The Extracellular segment spans residues 23 to 337 (RPRNLLSLLA…QDQLSQTERY (315 aa)). 3 disulfides stabilise this stretch: Cys56/Cys61, Cys64/Cys110, and Cys160/Cys195. N-linked (GlcNAc...) asparagine glycans are attached at residues Asn192 and Asn219. A disordered region spans residues 233-273 (GVGGEDHSDHDDHGDHADHSHPDRKASHQDSELHTPHNSNS). The span at 236–267 (GEDHSDHDDHGDHADHSHPDRKASHQDSELHT) shows a compositional bias: basic and acidic residues. Asn272 carries N-linked (GlcNAc...) asparagine glycosylation. Cysteines 280 and 319 form a disulfide. Residues 338-358 (LYGSLATLLICLCAVFGLLLL) traverse the membrane as a helical segment. Over 359 to 376 (TCAKCSTATHYIMQTFLS) the chain is Cytoplasmic. The chain crosses the membrane as a helical span at residues 377–397 (LAVGALTGDALLHLIPKVLGL). Over 398 to 420 (HTHGGEGHTHEEEVGVGGQATWR) the chain is Extracellular. A helical transmembrane segment spans residues 421 to 441 (LLAVLGGFYIFFLFESFFNLL). Residues 442–511 (LPRDQDSEKD…LRAELRLLPY (70 aa)) are Cytoplasmic-facing. Residues 465–467 (LQL) carry the Essential for SLC39A4 endocytosis motif. Residues 512 to 531 (LITLGDAVHNFADGLAVGAA) form a helical membrane-spanning segment. 3 residues coordinate Zn(2+): His520, Asn521, and Asp524. Topologically, residues 532–539 (FSSSWKTG) are extracellular. Residues 540-566 (LATSLAVFCHELPHELGDFAALLHAGL) form a helical membrane-spanning segment. Residues His549, Glu550, and His553 each contribute to the Zn(2+) site. The Cytoplasmic segment spans residues 567-571 (SVKRA). The helical transmembrane segment at 572–592 (LLLNLASALTAFAGLYVALAV) threads the bilayer. Residues 593-599 (GVGEEGE) are Extracellular-facing. The chain crosses the membrane as a helical span at residues 600–620 (AWILAVATGLFLYVALCDMLP). At 621–630 (AMMNVRDQRP) the chain is on the cytoplasmic side. A helical membrane pass occupies residues 631-651 (WLLFLLHNVGLLGGWTVLLLL). Residues 652–660 (SLYEDNITF) are Extracellular-facing. Asn657 is a glycosylation site (N-linked (GlcNAc...) asparagine).

This sequence belongs to the ZIP transporter (TC 2.A.5) family. As to quaternary structure, homodimer. Homodimerization is mediated by the transmembrane domain. In terms of processing, the extracellular N-terminal ectodomain is cleaved when cells are Zn(2+) deficient, N-terminally cleaved SLC39A4 is then internalized faster. Post-translationally, under excess Zn(2+) conditions, SLC39A4 on the cell surface is rapidly endocytosed, ubiquitinated, and degraded. N-glycosylated. Highly expressed in the small intestine and embryonic visceral yolk sac. Weakly expressed in the stomach and liver.

It is found in the cell membrane. The protein localises to the recycling endosome membrane. It localises to the apical cell membrane. It catalyses the reaction Zn(2+)(in) = Zn(2+)(out). Selective transporter that mediates the uptake of Zn(2+). Plays an essential role for dietary zinc uptake from small intestine. The Zn(2+) uniporter activity is regulated by zinc availability. Also exhibits polyspecific binding and transport of Cu(2+), Cd(2+) and possibly Ni(2+) but at higher concentrations. The sequence is that of Zinc transporter ZIP4 (Slc39a4) from Mus musculus (Mouse).